A 333-amino-acid polypeptide reads, in one-letter code: Trimethylamine N-oxide-binding protein (333 aa).

A signal peptide spans 1-42 (MRLFREIAANDPGPTGRMKNMKTFTTALATGVLALCPLAALA). 5 residues coordinate trimethylamine N-oxide: tryptophan 55, tryptophan 102, glutamate 131, tryptophan 177, and tryptophan 222. 5 residues coordinate Ca(2+): proline 249, valine 251, asparagine 254, alanine 257, and aspartate 260.

The complex is probably composed of two ATP-binding proteins (TmoW), two transmembrane proteins (TmoV) and a solute-binding protein (TmoX). Monomer in solution, but forms homodimers in crystals.

It is found in the periplasm. With respect to regulation, binds a Ca(2+) ion, which has little effect on either the binding affinity or the secondary structure, but plays an important role in maintaining the stability of TmoX. It may modulate the protein stability in response to biological needs and environmental changes. Thermostability is dramatically decreased when Ca(2+) is removed by EDTA. Its function is as follows. Part of the ABC transporter complex TmoXWV involved in trimethylamine N-oxide (TMAO) import. Is specific for TMAO and essential for TMAO metabolism. Binds TMAO with high affinity. In vitro, also presents a high binding affinity for choline, however this transporter seems specific for TMAO and the choline-binding affinity presented by recombinant TmoX may not make physiological sense. This is Trimethylamine N-oxide-binding protein from Ruegeria pomeroyi (strain ATCC 700808 / DSM 15171 / DSS-3) (Silicibacter pomeroyi).